Reading from the N-terminus, the 206-residue chain is Max dimerization protein 3 (206 aa).

The interval 8–25 (IQVLLQAAEFLERREREA) is interaction with SIN3A and SIN3B. Disordered regions lie at residues 29-66 (YASL…NELE) and 122-171 (KLRS…QEDL). A bHLH domain is found at 57–109 (SGRSVHNELEKRRRAQLKRCLEQLRQQMPLGVDCTRYTTLSLLRRARVHIQKL). Residues 126–138 (KQQSLQQQLEQLQ) show a composition bias toward low complexity. A compositionally biased stretch (basic and acidic residues) spans 143–153 (ARERERLRADS).

In terms of assembly, efficient DNA binding requires dimerization with another bHLH protein. Binds DNA as a heterodimer with MAX. Interacts with SIN3A AND SIN3B. Interacts with RNF17. In terms of tissue distribution, expressed only in the proliferating areas of the testis and thymus.

The protein resides in the nucleus. Its function is as follows. Transcriptional repressor. Binds with MAX to form a sequence-specific DNA-binding protein complex which recognizes the core sequence 5'-CAC[GA]TG-3'. Antagonizes MYC transcriptional activity by competing for MAX and suppresses MYC dependent cell transformation. This Mus musculus (Mouse) protein is Max dimerization protein 3 (Mxd3).